The following is a 285-amino-acid chain: HTH-type transcriptional regulator MurR (285 aa).

The HTH rpiR-type domain maps to 1–77 (MLYLTKIRNA…MALIGEYSAS (77 aa)). The segment at residues 37-56 (SRKMAKQLGISQSSIVKFAQ) is a DNA-binding region (H-T-H motif). Positions 128 to 268 (IIEVISKAPF…FVGLVQLNDV (141 aa)) constitute an SIS domain.

As to quaternary structure, homotetramer.

It participates in amino-sugar metabolism; N-acetylmuramate degradation [regulation]. Its function is as follows. Represses the expression of the murPQ operon involved in the uptake and degradation of N-acetylmuramic acid (MurNAc). Binds to two adjacent inverted repeats within the operator region. MurNAc 6-phosphate, the substrate of MurQ, is the specific inducer that weakens binding of MurR to the operator. The chain is HTH-type transcriptional regulator MurR from Escherichia coli O9:H4 (strain HS).